Here is a 346-residue protein sequence, read N- to C-terminus: fMet-Leu-Phe receptor (346 aa).

N-linked (GlcNAc...) asparagine glycosylation is found at asparagine 1 and asparagine 7. The Extracellular segment spans residues asparagine 1–isoleucine 24. The helical transmembrane segment at valine 25–valine 47 threads the bilayer. The Cytoplasmic segment spans residues alanine 48 to threonine 58. Residues isoleucine 59–valine 80 traverse the membrane as a helical segment. The Extracellular portion of the chain corresponds to lysine 81–phenylalanine 97. Residues cysteine 95 and cysteine 173 are joined by a disulfide bond. Residues isoleucine 98–leucine 118 traverse the membrane as a helical segment. The Cytoplasmic segment spans residues aspartate 119–serine 137. The chain crosses the membrane as a helical span at residues leucine 138–isoleucine 159. The Extracellular segment spans residues arginine 160–arginine 202. A helical membrane pass occupies residues phenylalanine 203 to threonine 223. Residues lysine 224–valine 239 lie on the Cytoplasmic side of the membrane. The helical transmembrane segment at leucine 240–valine 263 threads the bilayer. At arginine 264–valine 282 the chain is on the extracellular side. Residues threonine 283–glycine 302 form a helical membrane-spanning segment. The Cytoplasmic segment spans residues glutamine 303–alanine 346. Residues threonine 322 to alanine 346 form a disordered region. The segment covering glutamate 323–proline 338 has biased composition (polar residues).

The protein belongs to the G-protein coupled receptor 1 family. Post-translationally, phosphorylated; which is necessary for desensitization.

Its subcellular location is the cell membrane. Its function is as follows. High affinity receptor for N-formyl-methionyl peptides (fMLP), which are powerful neutrophil chemotactic factors. Binding of fMLP to the receptor stimulates intracellular calcium mobilization and superoxide anion release. This response is mediated via a G-protein that activates a phosphatidylinositol-calcium second messenger system. Receptor for TAFA4, mediates its effects on chemoattracting macrophages, promoting phagocytosis and increasing ROS release. Receptor for cathepsin CTSG, leading to increased phagocyte chemotaxis. The chain is fMet-Leu-Phe receptor (FPR1) from Gorilla gorilla gorilla (Western lowland gorilla).